The sequence spans 255 residues: H-2 class II histocompatibility antigen, E-D alpha chain (255 aa).

The N-terminal stretch at 1 to 25 (MATIGALVLRFFFIAVLMSSQKSWA) is a signal peptide. An alpha-1 region spans residues 26–109 (IKEEHTIIQA…ERSNNTPDAN (84 aa)). Residues 26-216 (IKEEHTIIQA…EKTLLPETKE (191 aa)) are Extracellular-facing. Residues 110 to 203 (VAPEVTVLSR…GLEEPLRKTW (94 aa)) form an alpha-2 region. One can recognise an Ig-like C1-type domain in the interval 112 to 204 (PEVTVLSRSP…LEEPLRKTWE (93 aa)). Cysteines 132 and 188 form a disulfide. Asparagine 143 carries N-linked (GlcNAc...) asparagine glycosylation. The segment at 204-216 (EFEEKTLLPETKE) is connecting peptide. Residues 217 to 242 (NVMCALGLFVGLVGIVVGIILIMKGI) form a helical membrane-spanning segment. At 243-255 (KKRNVVERRQGAL) the chain is on the cytoplasmic side.

The protein belongs to the MHC class II family.

It localises to the membrane. This Mus musculus (Mouse) protein is H-2 class II histocompatibility antigen, E-D alpha chain (H2-Ea).